The sequence spans 167 residues: Photosystem I assembly protein Ycf3 (167 aa).

TPR repeat units follow at residues 35–68 (AFSY…EEDP), 72–105 (SFIL…NNKL), and 120–153 (AVKA…APSN).

The protein belongs to the Ycf3 family.

It localises to the plastid. The protein localises to the chloroplast thylakoid membrane. In terms of biological role, essential for the assembly of the photosystem I (PSI) complex. May act as a chaperone-like factor to guide the assembly of the PSI subunits. The chain is Photosystem I assembly protein Ycf3 from Galdieria sulphuraria (Red alga).